The chain runs to 198 residues: NADH-quinone oxidoreductase subunit C (198 aa).

Belongs to the complex I 30 kDa subunit family. NDH-1 is composed of 14 different subunits. Subunits NuoB, C, D, E, F, and G constitute the peripheral sector of the complex.

The protein resides in the cell inner membrane. It catalyses the reaction a quinone + NADH + 5 H(+)(in) = a quinol + NAD(+) + 4 H(+)(out). Functionally, NDH-1 shuttles electrons from NADH, via FMN and iron-sulfur (Fe-S) centers, to quinones in the respiratory chain. The immediate electron acceptor for the enzyme in this species is believed to be ubiquinone. Couples the redox reaction to proton translocation (for every two electrons transferred, four hydrogen ions are translocated across the cytoplasmic membrane), and thus conserves the redox energy in a proton gradient. The sequence is that of NADH-quinone oxidoreductase subunit C from Chromobacterium violaceum (strain ATCC 12472 / DSM 30191 / JCM 1249 / CCUG 213 / NBRC 12614 / NCIMB 9131 / NCTC 9757 / MK).